A 1201-amino-acid polypeptide reads, in one-letter code: DNA-directed RNA polymerase subunit beta (1201 aa).

Residues 1165 to 1201 form a disordered region; sequence DALSKFKQQQDEKAADKAAKADAAKPSETTNAQQDNQ. Residues 1172-1189 are compositionally biased toward basic and acidic residues; that stretch reads QQQDEKAADKAAKADAAK. A compositionally biased stretch (polar residues) spans 1191–1201; the sequence is SETTNAQQDNQ.

The protein belongs to the RNA polymerase beta chain family. The RNAP catalytic core consists of 2 alpha, 1 beta, 1 beta' and 1 omega subunit. When a sigma factor is associated with the core the holoenzyme is formed, which can initiate transcription.

The enzyme catalyses RNA(n) + a ribonucleoside 5'-triphosphate = RNA(n+1) + diphosphate. DNA-dependent RNA polymerase catalyzes the transcription of DNA into RNA using the four ribonucleoside triphosphates as substrates. This chain is DNA-directed RNA polymerase subunit beta, found in Lactiplantibacillus plantarum (strain ATCC BAA-793 / NCIMB 8826 / WCFS1) (Lactobacillus plantarum).